The chain runs to 377 residues: Nitric oxide reductase FlRd-NAD(+) reductase (377 aa).

It belongs to the FAD-dependent oxidoreductase family. It depends on FAD as a cofactor.

The protein localises to the cytoplasm. It carries out the reaction 2 reduced [nitric oxide reductase rubredoxin domain] + NAD(+) + H(+) = 2 oxidized [nitric oxide reductase rubredoxin domain] + NADH. It functions in the pathway nitrogen metabolism; nitric oxide reduction. Functionally, one of at least two accessory proteins for anaerobic nitric oxide (NO) reductase. Reduces the rubredoxin moiety of NO reductase. This is Nitric oxide reductase FlRd-NAD(+) reductase from Escherichia coli O81 (strain ED1a).